Reading from the N-terminus, the 322-residue chain is MQWYLVAALLTVLTSSQGILTTLSQSNGKYKYDYATIPFLAELFKLSFSSFFLWKECQSSSPPRMTKEWRSIRLYLVPSVIYLIHNNVQFATLTYVDPSTYQIMGNLKIVTTGILFRLVLKRKLSNLQWMAVVLLAVGTTTSQVKGCGDAPCDSLFSAPFQGYMLGILSACLSALAGVYTEYLMKKNNDSLYWQNVQLYTFGVIFNMGWLIYGDFKAGFERGPWWQRLFNGYSITTWMVVFNLGSTGLLVSWLMKYSDNIVKVYSTSMAMLLTMVLSVYLFNVRATLQLFLGIVICIISLQMYFMPVNMLVELPQALPVTSK.

The Cytoplasmic segment spans residues 1 to 2 (MQ). A helical membrane pass occupies residues 3-23 (WYLVAALLTVLTSSQGILTTL). Residues 24 to 33 (SQSNGKYKYD) are Lumenal-facing. The helical transmembrane segment at 34-54 (YATIPFLAELFKLSFSSFFLW) threads the bilayer. Residues 55-75 (KECQSSSPPRMTKEWRSIRLY) lie on the Cytoplasmic side of the membrane. Residues 76-96 (LVPSVIYLIHNNVQFATLTYV) traverse the membrane as a helical segment. Residues 97-100 (DPST) lie on the Lumenal side of the membrane. The helical transmembrane segment at 101–120 (YQIMGNLKIVTTGILFRLVL) threads the bilayer. The Cytoplasmic segment spans residues 121 to 126 (KRKLSN). A helical transmembrane segment spans residues 127–144 (LQWMAVVLLAVGTTTSQV). At 145–157 (KGCGDAPCDSLFS) the chain is on the lumenal side. Residues 158 to 178 (APFQGYMLGILSACLSALAGV) traverse the membrane as a helical segment. The Cytoplasmic portion of the chain corresponds to 179 to 198 (YTEYLMKKNNDSLYWQNVQL). The chain crosses the membrane as a helical span at residues 199–219 (YTFGVIFNMGWLIYGDFKAGF). At 220 to 233 (ERGPWWQRLFNGYS) the chain is on the lumenal side. A helical transmembrane segment spans residues 234–254 (ITTWMVVFNLGSTGLLVSWLM). At 255 to 262 (KYSDNIVK) the chain is on the cytoplasmic side. The chain crosses the membrane as a helical span at residues 263 to 283 (VYSTSMAMLLTMVLSVYLFNV). The Lumenal portion of the chain corresponds to 284-286 (RAT).

The protein belongs to the nucleotide-sugar transporter family. CMP-Sialate:CMP antiporter (TC 2.A.7.12) subfamily. In terms of tissue distribution, expressed in roots, leaves and stalks.

The protein localises to the golgi apparatus membrane. Sugar transporter involved in the transport of CMP-sialic acid from the cytoplasm into the Golgi. May transport important nucleotide sugars such as CMP-Kdo (2-keto-3-deoxy-D-manno-octulosonic acid) in physiological conditions. This is CMP-sialic acid transporter 1 from Oryza sativa subsp. japonica (Rice).